Consider the following 742-residue polypeptide: Zinc finger protein 280C (742 aa).

Glycyl lysine isopeptide (Lys-Gly) (interchain with G-Cter in SUMO2) cross-links involve residues Lys-10, Lys-23, Lys-42, Lys-65, Lys-85, Lys-123, and Lys-135. Residues 138–168 (FTKTSPQEDSGACSVSQSDSTQDIPSSNILQ) show a composition bias toward polar residues. A disordered region spans residues 138–243 (FTKTSPQEDS…QSAPGSSSLR (106 aa)). Glycyl lysine isopeptide (Lys-Gly) (interchain with G-Cter in SUMO2) cross-links involve residues Lys-180, Lys-186, and Lys-193. Residues 182-191 (PSTSKVNSVN) are compositionally biased toward polar residues. The segment covering 200 to 222 (SISETRPCSSSSSQTAPSGASSQ) has biased composition (low complexity). Residues 223-243 (TVLSNVNTSSVQSAPGSSSLR) show a composition bias toward polar residues. C2H2-type zinc fingers lie at residues 323–345 (FKCF…MKHH), 360–383 (TTCQ…ESTH), 390–413 (TICK…KDTH), 420–443 (YICQ…RSSH), and 477–499 (YRCP…KLEH). The segment covering 523-578 (LGSSQSRASSPPSSTIPSTSLQLSVPKSKSTTTKNNSKVSANKATTTSPQTVATTT) has biased composition (low complexity). Positions 523-608 (LGSSQSRASS…YKQKRQRTRK (86 aa)) are disordered. Residues 579–592 (GKPSASKPGTGTTK) show a composition bias toward polar residues. A Glycyl lysine isopeptide (Lys-Gly) (interchain with G-Cter in SUMO2) cross-link involves residue Lys-580. The span at 593 to 608 (SKAKPSYKQKRQRTRK) shows a compositional bias: basic residues.

It localises to the nucleus. May function as a transcription factor. This chain is Zinc finger protein 280C (Znf280c), found in Mus musculus (Mouse).